A 217-amino-acid chain; its full sequence is N-(5'-phosphoribosyl)anthranilate isomerase (217 aa).

Belongs to the TrpF family.

It catalyses the reaction N-(5-phospho-beta-D-ribosyl)anthranilate = 1-(2-carboxyphenylamino)-1-deoxy-D-ribulose 5-phosphate. It participates in amino-acid biosynthesis; L-tryptophan biosynthesis; L-tryptophan from chorismate: step 3/5. The chain is N-(5'-phosphoribosyl)anthranilate isomerase from Chlorobium phaeobacteroides (strain BS1).